The sequence spans 549 residues: MKSPSSSAEMQSSSPEPAPWKPDFQVYAIVIGLGITNLLAALENTVLTIAAPVVLTDLELGENFIWVTNAFFLSSTAILPLFGQFSNIFGRRYVMLTAVAIFVLGSGLCGGASTGAMLIAGRAIQGVGSGGIIMLSSIIISDLVPLRQRGNFSAILMSILGIGSALGPLIGGAIVSSISWRWVFYLNLPIGGVSFVFLFIFLRVKYNKEMTFWQKIKRIDLVGNAIVIASTVAILYALSYAGTRYPWRSWHTLVPLLVGFLGLFIFAGLQTTAFSAEPLMPTRFFRAPTSIILAINTFVSAALLYWCLFFLPVFLQSVKLYSPRRAGVALLPISLLGIPGSMVGAIALVRWGRYKPVHIFAFALQTLGLGLFTLFREDTSVAEWAVFQCIVAFGGGMIFTTMLPAFQAFIHERDIAACTAAWYFIRLFGHIWGVAIPAAIFNQRIDTLLGQGAISDPSVSKTIAAGGAYQAASAAFVKQFPGSLQLEIRSVYSQAIQRVFQVSIAFAGVAFLLTLLEKDVGLRKTLETDFGLEKEGAGQQADVEGRSHE.

The next 4 membrane-spanning stretches (helical) occupy residues 29 to 49 (IVIG…VLTI), 63 to 83 (NFIW…PLFG), 99 to 119 (VAIF…AMLI), and 126 to 146 (GVGS…LVPL). N151 carries an N-linked (GlcNAc...) asparagine glycan. Transmembrane regions (helical) follow at residues 155 to 175 (ILMS…GAIV), 182 to 202 (WVFY…FIFL), 221 to 241 (LVGN…LSYA), 249 to 269 (SWHT…FAGL), 291 to 311 (IILA…LFFL), 328 to 348 (VALL…AIAL), 355 to 375 (KPVH…FTLF), 390 to 410 (IVAF…QAFI), 421 to 441 (AWYF…AAIF), and 502 to 522 (VSIA…DVGL).

The protein belongs to the major facilitator superfamily.

Its subcellular location is the membrane. In terms of biological role, MFS efflux transporter; part of the gene cluster that mediates the biosynthesis of wortmanamides A and B, reduced long-chain polyketides amidated with a specific omega-amino acid, 5-aminopentanoic acid (5PA). The protein is MFS-type transporter TwmF of Talaromyces wortmannii (Penicillium wortmannii).